A 123-amino-acid chain; its full sequence is Large ribosomal subunit protein bL19 (123 aa).

This sequence belongs to the bacterial ribosomal protein bL19 family.

This protein is located at the 30S-50S ribosomal subunit interface and may play a role in the structure and function of the aminoacyl-tRNA binding site. The polypeptide is Large ribosomal subunit protein bL19 (Ruegeria sp. (strain TM1040) (Silicibacter sp.)).